The chain runs to 339 residues: Ketol-acid reductoisomerase (NADP(+)) (339 aa).

A KARI N-terminal Rossmann domain is found at 1 to 182; it reads MRVYYDRDAD…GGGRAGIIET (182 aa). NADP(+) is bound by residues 24–27, R48, S51, S53, and 83–86; these read YGSQ and DELQ. Residue H108 is part of the active site. G134 is an NADP(+) binding site. The 146-residue stretch at 183 to 328 folds into the KARI C-terminal knotted domain; the sequence is TFREECETDL…AKLRDMMPWI (146 aa). D191, E195, E227, and E231 together coordinate Mg(2+). S252 provides a ligand contact to substrate.

It belongs to the ketol-acid reductoisomerase family. Mg(2+) is required as a cofactor.

The catalysed reaction is (2R)-2,3-dihydroxy-3-methylbutanoate + NADP(+) = (2S)-2-acetolactate + NADPH + H(+). It carries out the reaction (2R,3R)-2,3-dihydroxy-3-methylpentanoate + NADP(+) = (S)-2-ethyl-2-hydroxy-3-oxobutanoate + NADPH + H(+). It participates in amino-acid biosynthesis; L-isoleucine biosynthesis; L-isoleucine from 2-oxobutanoate: step 2/4. Its pathway is amino-acid biosynthesis; L-valine biosynthesis; L-valine from pyruvate: step 2/4. In terms of biological role, involved in the biosynthesis of branched-chain amino acids (BCAA). Catalyzes an alkyl-migration followed by a ketol-acid reduction of (S)-2-acetolactate (S2AL) to yield (R)-2,3-dihydroxy-isovalerate. In the isomerase reaction, S2AL is rearranged via a Mg-dependent methyl migration to produce 3-hydroxy-3-methyl-2-ketobutyrate (HMKB). In the reductase reaction, this 2-ketoacid undergoes a metal-dependent reduction by NADPH to yield (R)-2,3-dihydroxy-isovalerate. The chain is Ketol-acid reductoisomerase (NADP(+)) from Nitrobacter hamburgensis (strain DSM 10229 / NCIMB 13809 / X14).